A 228-amino-acid chain; its full sequence is N-(5'-phosphoribosyl)anthranilate isomerase (228 aa).

It belongs to the TrpF family.

It catalyses the reaction N-(5-phospho-beta-D-ribosyl)anthranilate = 1-(2-carboxyphenylamino)-1-deoxy-D-ribulose 5-phosphate. It participates in amino-acid biosynthesis; L-tryptophan biosynthesis; L-tryptophan from chorismate: step 3/5. The chain is N-(5'-phosphoribosyl)anthranilate isomerase from Azorhizobium caulinodans (strain ATCC 43989 / DSM 5975 / JCM 20966 / LMG 6465 / NBRC 14845 / NCIMB 13405 / ORS 571).